The following is a 184-amino-acid chain: Putative tetraheme cytochrome-c type (184 aa).

Topologically, residues 1-14 (MSKHAASSAKRFSL) are cytoplasmic. The helical transmembrane segment at 15 to 35 (LALGLMFVGGIVFVWAVDFGI) threads the bilayer. Over 36–184 (KTTNTLEFCT…HEPTEPDDAS (149 aa)) the chain is Periplasmic. The heme site is built by cysteine 44, cysteine 47, methionine 50, cysteine 73, cysteine 76, and histidine 77. Substrate is bound by residues lysine 89 and aspartate 95. Aspartate 95, cysteine 133, cysteine 136, histidine 137, cysteine 165, cysteine 168, histidine 169, and histidine 174 together coordinate heme.

It belongs to the NapC/NirT/NrfH family. In terms of processing, binds 4 heme groups per subunit.

It is found in the cell inner membrane. In Allochromatium vinosum (strain ATCC 17899 / DSM 180 / NBRC 103801 / NCIMB 10441 / D) (Chromatium vinosum), this protein is Putative tetraheme cytochrome-c type.